Consider the following 321-residue polypeptide: tRNA U34 carboxymethyltransferase (321 aa).

Carboxy-S-adenosyl-L-methionine contacts are provided by residues K90, W104, K109, G129, 151–153 (DPT), 180–181 (IE), M195, Y199, and R314.

The protein belongs to the class I-like SAM-binding methyltransferase superfamily. CmoB family. As to quaternary structure, homotetramer.

The enzyme catalyses carboxy-S-adenosyl-L-methionine + 5-hydroxyuridine(34) in tRNA = 5-carboxymethoxyuridine(34) in tRNA + S-adenosyl-L-homocysteine + H(+). Functionally, catalyzes carboxymethyl transfer from carboxy-S-adenosyl-L-methionine (Cx-SAM) to 5-hydroxyuridine (ho5U) to form 5-carboxymethoxyuridine (cmo5U) at position 34 in tRNAs. This chain is tRNA U34 carboxymethyltransferase, found in Histophilus somni (strain 129Pt) (Haemophilus somnus).